Reading from the N-terminus, the 258-residue chain is UPF0328 protein ECU02_0090 (258 aa).

The protein belongs to the UPF0328 family.

The protein is UPF0328 protein ECU02_0090 of Encephalitozoon cuniculi (strain GB-M1) (Microsporidian parasite).